The chain runs to 124 residues: Large ribosomal subunit protein bL12 (124 aa).

The protein belongs to the bacterial ribosomal protein bL12 family. Homodimer. Part of the ribosomal stalk of the 50S ribosomal subunit. Forms a multimeric L10(L12)X complex, where L10 forms an elongated spine to which 2 to 4 L12 dimers bind in a sequential fashion. Binds GTP-bound translation factors.

Functionally, forms part of the ribosomal stalk which helps the ribosome interact with GTP-bound translation factors. Is thus essential for accurate translation. The polypeptide is Large ribosomal subunit protein bL12 (Nautilia profundicola (strain ATCC BAA-1463 / DSM 18972 / AmH)).